The following is a 162-amino-acid chain: 2-amino-4-hydroxy-6-hydroxymethyldihydropteridine pyrophosphokinase (162 aa).

It belongs to the HPPK family.

It carries out the reaction 6-hydroxymethyl-7,8-dihydropterin + ATP = (7,8-dihydropterin-6-yl)methyl diphosphate + AMP + H(+). The protein operates within cofactor biosynthesis; tetrahydrofolate biosynthesis; 2-amino-4-hydroxy-6-hydroxymethyl-7,8-dihydropteridine diphosphate from 7,8-dihydroneopterin triphosphate: step 4/4. Functionally, catalyzes the transfer of pyrophosphate from adenosine triphosphate (ATP) to 6-hydroxymethyl-7,8-dihydropterin, an enzymatic step in folate biosynthesis pathway. This chain is 2-amino-4-hydroxy-6-hydroxymethyldihydropteridine pyrophosphokinase (folK), found in Streptococcus pyogenes serotype M3 (strain ATCC BAA-595 / MGAS315).